The primary structure comprises 458 residues: Mannan endo-1,6-alpha-mannosidase DFG5 (458 aa).

The signal sequence occupies residues 1-26 (MIVNISAKMILSICFTFLSFFKATHA). Asn-89, Asn-114, Asn-138, Asn-208, Asn-231, Asn-245, Asn-270, Asn-273, and Asn-417 each carry an N-linked (GlcNAc...) asparagine glycan. The tract at residues 399 to 418 (PYKEDNGGTSKGDANAGMNS) is disordered. Gly-437 carries the GPI-anchor amidated glycine lipid modification. The propeptide at 438-458 (AAIITAVILSVLTGGAVWMLF) is removed in mature form.

This sequence belongs to the glycosyl hydrolase 76 family. In terms of processing, N-glycosylated.

The protein localises to the cell membrane. The enzyme catalyses Random hydrolysis of (1-&gt;6)-alpha-D-mannosidic linkages in unbranched (1-&gt;6)-mannans.. Functionally, required for normal synthesis of the cell wall. The chain is Mannan endo-1,6-alpha-mannosidase DFG5 (DFG5) from Saccharomyces cerevisiae (strain ATCC 204508 / S288c) (Baker's yeast).